A 119-amino-acid polypeptide reads, in one-letter code: uncharacterized protein (119 aa).

Positions 64–119 are disordered; the sequence is SAPLGLKEVQKKSNEGLNEVQGAADINKQKRPANSQDSSSVEGDIQNFLEKVTGKN. Positions 95 to 104 are enriched in polar residues; sequence PANSQDSSSV.

This is an uncharacterized protein from Nostoc sp. (strain PCC 7120 / SAG 25.82 / UTEX 2576).